The following is a 420-amino-acid chain: Heterogeneous nuclear ribonucleoprotein D-like (420 aa).

Disordered stretches follow at residues 1–83 and 96–120; these read MEVP…RRRP and QRSA…SVTM. Arginine 25 is subject to Omega-N-methylarginine. Over residues 36-52 the composition is skewed to low complexity; sequence RQLAPLLPSLAPSSARQ. RRM domains are found at residues 148-230 and 233-312; these read GKMF…KGKE and KKVF…QPKE. Lysine 161 is subject to N6-methyllysine. A Glycyl lysine isopeptide (Lys-Gly) (interchain with G-Cter in SUMO2) cross-link involves residue lysine 209. Lysine 216 is modified (N6-acetyllysine). Serine 241 is modified (phosphoserine). Disordered regions lie at residues 313 to 348 and 398 to 420; these read VYRQ…NWNQ and GQQS…YQPY. A compositionally biased stretch (gly residues) spans 323–342; it reads GGRGAAAGGRGGTRGRGRGQ. Positions 342–420 are necessary for interaction with TNPO1; that stretch reads QGQNWNQGFN…GNHQNNYQPY (79 aa). The interval 396 to 420 is necessary for its nuclear import and export; it reads YSGQQSTYGKASRGGGNHQNNYQPY. At arginine 408 the chain carries Dimethylated arginine; alternate. Arginine 408 is subject to Omega-N-methylarginine; alternate.

Interacts with ZNF148. Interacts with TNPO1. In terms of processing, dimethylation of Arg-408 is probably of the asymmetric type. In terms of tissue distribution, expressed in heart, brain, placenta, lung, liver, skeletal muscle, kidney, pancreas, spleen, thymus, prostate, testis, ovary, small intestine, colon and leukocytes. Expressed in myeloid leukemia, gastric adenocarcinoma, cervical carcinoma, hepatoma, fibrosarcoma, colon adenocarcinoma, epidermoid carcinoma, osteosarcoma and urinary bladder carcinoma cells.

The protein localises to the nucleus. It localises to the cytoplasm. In terms of biological role, acts as a transcriptional regulator. Promotes transcription repression. Promotes transcription activation in differentiated myotubes. Binds to double- and single-stranded DNA sequences. Binds to the transcription suppressor CATR sequence of the COX5B promoter. Binds with high affinity to RNA molecules that contain AU-rich elements (AREs) found within the 3'-UTR of many proto-oncogenes and cytokine mRNAs. Binds both to nuclear and cytoplasmic poly(A) mRNAs. Binds to poly(G) and poly(A), but not to poly(U) or poly(C) RNA homopolymers. Binds to the 5'-ACUAGC-3' RNA consensus sequence. This Homo sapiens (Human) protein is Heterogeneous nuclear ribonucleoprotein D-like (HNRNPDL).